The following is a 577-amino-acid chain: Arginine--tRNA ligase (577 aa).

Positions 122-132 (PNVAKEMHVGH) match the 'HIGH' region motif.

Belongs to the class-I aminoacyl-tRNA synthetase family. Monomer.

It is found in the cytoplasm. The enzyme catalyses tRNA(Arg) + L-arginine + ATP = L-arginyl-tRNA(Arg) + AMP + diphosphate. In Haemophilus influenzae (strain PittGG), this protein is Arginine--tRNA ligase.